Consider the following 566-residue polypeptide: Arginine--tRNA ligase (566 aa).

A 'HIGH' region motif is present at residues 121–131 (PNIAKPMSMGH).

This sequence belongs to the class-I aminoacyl-tRNA synthetase family. As to quaternary structure, monomer.

It localises to the cytoplasm. It carries out the reaction tRNA(Arg) + L-arginine + ATP = L-arginyl-tRNA(Arg) + AMP + diphosphate. The chain is Arginine--tRNA ligase from Oenococcus oeni (strain ATCC BAA-331 / PSU-1).